Here is a 213-residue protein sequence, read N- to C-terminus: Ribosomal RNA small subunit methyltransferase G (213 aa).

S-adenosyl-L-methionine-binding positions include Gly-77, Met-82, 104–106 (EKS), and Arg-145.

This sequence belongs to the methyltransferase superfamily. RNA methyltransferase RsmG family.

It is found in the cytoplasm. It carries out the reaction guanosine(527) in 16S rRNA + S-adenosyl-L-methionine = N(7)-methylguanosine(527) in 16S rRNA + S-adenosyl-L-homocysteine. Specifically methylates the N7 position of guanine in position 527 of 16S rRNA. This chain is Ribosomal RNA small subunit methyltransferase G, found in Pelagibacter ubique (strain HTCC1062).